Here is a 226-residue protein sequence, read N- to C-terminus: Agamous-like MADS-box protein AGL23 (226 aa).

Residues Leu6–Asn66 form the MADS-box domain. Residues Val95–Trp132 are a coiled coil. Residues Glu108–Glu127 show a composition bias toward basic and acidic residues. The segment at Glu108–Glu131 is disordered.

It is found in the nucleus. Its function is as follows. Probable transcription factor that controls female gametophyte (megagametogenesis) development and chloroplast biogenesis during embryo development. The polypeptide is Agamous-like MADS-box protein AGL23 (Arabidopsis thaliana (Mouse-ear cress)).